A 408-amino-acid chain; its full sequence is LL-diaminopimelate aminotransferase (408 aa).

2 residues coordinate substrate: Tyr-15 and Gly-42. Pyridoxal 5'-phosphate contacts are provided by residues Tyr-72, 108–109 (SK), Tyr-132, Asn-187, Tyr-218, and 246–248 (SFS). Substrate contacts are provided by Lys-109, Tyr-132, and Asn-187. N6-(pyridoxal phosphate)lysine is present on Lys-249. Positions 257 and 291 each coordinate pyridoxal 5'-phosphate. Substrate is bound by residues Asn-291 and Arg-387.

It belongs to the class-I pyridoxal-phosphate-dependent aminotransferase family. LL-diaminopimelate aminotransferase subfamily. In terms of assembly, homodimer. It depends on pyridoxal 5'-phosphate as a cofactor.

It catalyses the reaction (2S,6S)-2,6-diaminopimelate + 2-oxoglutarate = (S)-2,3,4,5-tetrahydrodipicolinate + L-glutamate + H2O + H(+). It participates in amino-acid biosynthesis; L-lysine biosynthesis via DAP pathway; LL-2,6-diaminopimelate from (S)-tetrahydrodipicolinate (aminotransferase route): step 1/1. Functionally, involved in the synthesis of meso-diaminopimelate (m-DAP or DL-DAP), required for both lysine and peptidoglycan biosynthesis. Catalyzes the direct conversion of tetrahydrodipicolinate to LL-diaminopimelate. The polypeptide is LL-diaminopimelate aminotransferase (Prochlorococcus marinus (strain NATL1A)).